Here is a 617-residue protein sequence, read N- to C-terminus: Proline--tRNA ligase (617 aa).

It belongs to the class-II aminoacyl-tRNA synthetase family. ProS type 1 subfamily. As to quaternary structure, homodimer.

It localises to the cytoplasm. The catalysed reaction is tRNA(Pro) + L-proline + ATP = L-prolyl-tRNA(Pro) + AMP + diphosphate. Catalyzes the attachment of proline to tRNA(Pro) in a two-step reaction: proline is first activated by ATP to form Pro-AMP and then transferred to the acceptor end of tRNA(Pro). As ProRS can inadvertently accommodate and process non-cognate amino acids such as alanine and cysteine, to avoid such errors it has two additional distinct editing activities against alanine. One activity is designated as 'pretransfer' editing and involves the tRNA(Pro)-independent hydrolysis of activated Ala-AMP. The other activity is designated 'posttransfer' editing and involves deacylation of mischarged Ala-tRNA(Pro). The misacylated Cys-tRNA(Pro) is not edited by ProRS. This chain is Proline--tRNA ligase, found in Streptococcus agalactiae serotype III (strain NEM316).